The following is a 555-amino-acid chain: Phosphomethylpyrimidine synthase (555 aa).

The segment at 78–104 is disordered; the sequence is VRDRWGFDNGSAESTKGELSMSERKPR. Substrate contacts are provided by residues Asn-191, Met-220, Tyr-249, His-285, 305 to 307, 346 to 349, and Glu-385; these read SRG and DALR. Residue His-389 coordinates Zn(2+). Residue Tyr-412 coordinates substrate. His-453 contacts Zn(2+). [4Fe-4S] cluster-binding residues include Cys-535, Cys-538, and Cys-543.

This sequence belongs to the ThiC family. [4Fe-4S] cluster is required as a cofactor.

It catalyses the reaction 5-amino-1-(5-phospho-beta-D-ribosyl)imidazole + S-adenosyl-L-methionine = 4-amino-2-methyl-5-(phosphooxymethyl)pyrimidine + CO + 5'-deoxyadenosine + formate + L-methionine + 3 H(+). It functions in the pathway cofactor biosynthesis; thiamine diphosphate biosynthesis. Catalyzes the synthesis of the hydroxymethylpyrimidine phosphate (HMP-P) moiety of thiamine from aminoimidazole ribotide (AIR) in a radical S-adenosyl-L-methionine (SAM)-dependent reaction. This is Phosphomethylpyrimidine synthase from Chlorobaculum parvum (strain DSM 263 / NCIMB 8327) (Chlorobium vibrioforme subsp. thiosulfatophilum).